Reading from the N-terminus, the 457-residue chain is Probable xyloglucan 6-xylosyltransferase 5 (457 aa).

Residues 1 to 40 (MGQDGSPAHKRPSGSGGGLPTTTLTNGGGRGGRGGLLPRG) form a disordered region. Residues 1-51 (MGQDGSPAHKRPSGSGGGLPTTTLTNGGGRGGRGGLLPRGRQMQKTFNNIK) are Cytoplasmic-facing. Residues 26–37 (NGGGRGGRGGLL) show a composition bias toward gly residues. Residues 52–72 (ITILCGFVTILVLRGTIGVGN) traverse the membrane as a helical; Signal-anchor for type II membrane protein segment. Topologically, residues 73 to 457 (LGSSSADAVN…RTPVETKPQN (385 aa)) are lumenal. The tract at residues 97–116 (RSDSDPTDLDEPQEGDMNPN) is disordered. Over residues 101–110 (DPTDLDEPQE) the composition is skewed to acidic residues. N-linked (GlcNAc...) asparagine glycans are attached at residues Asn116 and Asn432.

It belongs to the glycosyltransferase 34 family. As to quaternary structure, interacts with XXT2 and CSLC4. Interacts with FUT1 and XLT2. In terms of tissue distribution, highly expressed in roots, stems and cauline leaves, and at lower levels in rosette leaves, flowers and siliques.

It is found in the golgi apparatus membrane. It catalyses the reaction Transfers an alpha-D-xylosyl residue from UDP-D-xylose to a glucose residue in xyloglucan, forming an alpha-(1-&gt;6)-D-xylosyl-D-glucose linkage.. Its function is as follows. Probable xyloglucan xylosyltransferase involved in the biosynthesis of xyloglucan in roots. May act in association with XXT1 and XXT2. Associates with other xyloglucan-synthesizing enzymes to form multiprotein complexes for xyloglucan synthesis in the Golgi. The chain is Probable xyloglucan 6-xylosyltransferase 5 from Arabidopsis thaliana (Mouse-ear cress).